The primary structure comprises 204 residues: Dephospho-CoA kinase (204 aa).

The 193-residue stretch at 12–204 folds into the DPCK domain; it reads RIGVTGGIAS…AWRDQISSIC (193 aa). 20 to 25 is a binding site for ATP; the sequence is ASGKSS.

The protein belongs to the CoaE family.

The protein localises to the cytoplasm. It carries out the reaction 3'-dephospho-CoA + ATP = ADP + CoA + H(+). The protein operates within cofactor biosynthesis; coenzyme A biosynthesis; CoA from (R)-pantothenate: step 5/5. In terms of biological role, catalyzes the phosphorylation of the 3'-hydroxyl group of dephosphocoenzyme A to form coenzyme A. This is Dephospho-CoA kinase from Prochlorococcus marinus (strain MIT 9313).